A 211-amino-acid polypeptide reads, in one-letter code: Thiamine-phosphate synthase (211 aa).

4-amino-2-methyl-5-(diphosphooxymethyl)pyrimidine-binding positions include 37–41 (QLREK) and asparagine 69. The Mg(2+) site is built by aspartate 70 and glutamate 89. Residue serine 108 participates in 4-amino-2-methyl-5-(diphosphooxymethyl)pyrimidine binding. Residue 134 to 136 (TTT) participates in 2-[(2R,5Z)-2-carboxy-4-methylthiazol-5(2H)-ylidene]ethyl phosphate binding. Residue lysine 137 coordinates 4-amino-2-methyl-5-(diphosphooxymethyl)pyrimidine. Residues glycine 163 and 183–184 (VS) contribute to the 2-[(2R,5Z)-2-carboxy-4-methylthiazol-5(2H)-ylidene]ethyl phosphate site.

It belongs to the thiamine-phosphate synthase family. It depends on Mg(2+) as a cofactor.

The enzyme catalyses 2-[(2R,5Z)-2-carboxy-4-methylthiazol-5(2H)-ylidene]ethyl phosphate + 4-amino-2-methyl-5-(diphosphooxymethyl)pyrimidine + 2 H(+) = thiamine phosphate + CO2 + diphosphate. It carries out the reaction 2-(2-carboxy-4-methylthiazol-5-yl)ethyl phosphate + 4-amino-2-methyl-5-(diphosphooxymethyl)pyrimidine + 2 H(+) = thiamine phosphate + CO2 + diphosphate. It catalyses the reaction 4-methyl-5-(2-phosphooxyethyl)-thiazole + 4-amino-2-methyl-5-(diphosphooxymethyl)pyrimidine + H(+) = thiamine phosphate + diphosphate. Its pathway is cofactor biosynthesis; thiamine diphosphate biosynthesis; thiamine phosphate from 4-amino-2-methyl-5-diphosphomethylpyrimidine and 4-methyl-5-(2-phosphoethyl)-thiazole: step 1/1. Functionally, condenses 4-methyl-5-(beta-hydroxyethyl)thiazole monophosphate (THZ-P) and 2-methyl-4-amino-5-hydroxymethyl pyrimidine pyrophosphate (HMP-PP) to form thiamine monophosphate (TMP). The sequence is that of Thiamine-phosphate synthase from Enterococcus faecalis (strain ATCC 700802 / V583).